We begin with the raw amino-acid sequence, 128 residues long: Sulfurtransferase TusD (128 aa).

The active-site Cysteine persulfide intermediate is cysteine 78.

It belongs to the DsrE/TusD family. As to quaternary structure, heterohexamer, formed by a dimer of trimers. The hexameric TusBCD complex contains 2 copies each of TusB, TusC and TusD. The TusBCD complex interacts with TusE.

It is found in the cytoplasm. Functionally, part of a sulfur-relay system required for 2-thiolation of 5-methylaminomethyl-2-thiouridine (mnm(5)s(2)U) at tRNA wobble positions. Accepts sulfur from TusA and transfers it in turn to TusE. The sequence is that of Sulfurtransferase TusD from Klebsiella pneumoniae subsp. pneumoniae (strain ATCC 700721 / MGH 78578).